The following is a 129-amino-acid chain: uncharacterized protein (129 aa).

2 helical membrane-spanning segments follow: residues Phe-4–Ile-24 and Val-37–Ile-57.

It to B.burgdorferi BBF20.

The protein resides in the cell membrane. This is an uncharacterized protein from Borreliella burgdorferi (strain ATCC 35210 / DSM 4680 / CIP 102532 / B31) (Borrelia burgdorferi).